Reading from the N-terminus, the 108-residue chain is Putative lipid-binding protein AIR1B (108 aa).

An N-terminal signal peptide occupies residues 1-23 (MAPRTSLALFVSLNLLFFTCTSA). 3 disulfides stabilise this stretch: C28/C55, C35/C54, and C71/C107.

Belongs to the plant LTP family. PEARLI1 subfamily.

It is found in the secreted. The protein is Putative lipid-binding protein AIR1B (AIR1B) of Arabidopsis thaliana (Mouse-ear cress).